The primary structure comprises 84 residues: Beta-cardiotoxin CTX14 (84 aa).

Positions 1-21 (MKTLLLTLVVVTIVCLDLGYT) are cleaved as a signal peptide. Intrachain disulfides connect Cys-24/Cys-43, Cys-36/Cys-61, Cys-65/Cys-76, and Cys-77/Cys-82.

It belongs to the three-finger toxin family. Short-chain subfamily. Aminergic toxin sub-subfamily. Expressed by the venom gland.

It localises to the secreted. Its function is as follows. Acts as a beta-blocker by binding to beta-1 and beta-2 adrenergic receptors (ADRB1 and ADRB2). It dose-dependently decreases the heart rate (bradycardia), whereas conventional cardiotoxins increases it. At 100 mg/kg, intraperitoneal injection into mice provokes labored breathing, impaired locomotion, lack of response to external stimuli, and death (after 30 minutes). The protein is Beta-cardiotoxin CTX14 of Ophiophagus hannah (King cobra).